The chain runs to 677 residues: WD and tetratricopeptide repeats protein 1 (677 aa).

WD repeat units follow at residues 45 to 84 (GHSG…KLLS), 88 to 129 (GHTA…TIHM), 132 to 172 (DHTN…KHSE), 182 to 222 (GPMV…NHRK), and 265 to 305 (RLRV…RPYT). Serine 352 is modified (phosphoserine). 2 TPR repeats span residues 361–394 (LERV…APHN) and 396–431 (MLYG…NPCH). Residues 489-509 (EEKKAAGGGGGPVRLRSTSRK) are disordered. Serine 511 carries the phosphoserine modification. WD repeat units follow at residues 535–575 (NTTT…LVRV) and 578–617 (GDES…EDLT). The interval 655 to 677 (SSGGAGASDDEDSAEGQVQCRPS) is disordered.

It functions in the pathway protein modification; protein ubiquitination. Functionally, may function as a substrate receptor for CUL4-DDB1 E3 ubiquitin-protein ligase complex. The polypeptide is WD and tetratricopeptide repeats protein 1 (Wdtc1) (Mus musculus (Mouse)).